A 215-amino-acid polypeptide reads, in one-letter code: Cytochrome b6 (215 aa).

The chain crosses the membrane as a helical span at residues isoleucine 32–phenylalanine 52. A heme c-binding site is contributed by cysteine 35. Histidine 86 and histidine 100 together coordinate heme b. Transmembrane regions (helical) follow at residues alanine 90 to phenylalanine 110, leucine 116 to tyrosine 136, and alanine 186 to isoleucine 206. Heme b-binding residues include histidine 187 and histidine 202.

Belongs to the cytochrome b family. PetB subfamily. The 4 large subunits of the cytochrome b6-f complex are cytochrome b6, subunit IV (17 kDa polypeptide, PetD), cytochrome f and the Rieske protein, while the 4 small subunits are PetG, PetL, PetM and PetN. The complex functions as a dimer. It depends on heme b as a cofactor. Requires heme c as cofactor.

The protein resides in the plastid. Its subcellular location is the chloroplast thylakoid membrane. Component of the cytochrome b6-f complex, which mediates electron transfer between photosystem II (PSII) and photosystem I (PSI), cyclic electron flow around PSI, and state transitions. This chain is Cytochrome b6, found in Skeletonema costatum (Marine centric diatom).